Here is a 326-residue protein sequence, read N- to C-terminus: GMP reductase (326 aa).

The active-site Thioimidate intermediate is the Cys175. Ile204–Val227 contacts NADP(+).

It belongs to the IMPDH/GMPR family. GuaC type 2 subfamily.

The catalysed reaction is IMP + NH4(+) + NADP(+) = GMP + NADPH + 2 H(+). Catalyzes the irreversible NADPH-dependent deamination of GMP to IMP. It functions in the conversion of nucleobase, nucleoside and nucleotide derivatives of G to A nucleotides, and in maintaining the intracellular balance of A and G nucleotides. The polypeptide is GMP reductase (Bacillus licheniformis (strain ATCC 14580 / DSM 13 / JCM 2505 / CCUG 7422 / NBRC 12200 / NCIMB 9375 / NCTC 10341 / NRRL NRS-1264 / Gibson 46)).